The chain runs to 352 residues: Chalcone synthase C (352 aa).

The active site involves Cys-170.

The protein belongs to the thiolase-like superfamily. Chalcone/stilbene synthases family.

The enzyme catalyses (E)-4-coumaroyl-CoA + 3 malonyl-CoA + 3 H(+) = 2',4,4',6'-tetrahydroxychalcone + 3 CO2 + 4 CoA. It functions in the pathway secondary metabolite biosynthesis; flavonoid biosynthesis. Its function is as follows. The primary product of this enzyme is 4,2',4',6'-tetrahydroxychalcone (also termed naringenin-chalcone or chalcone) which can under specific conditions spontaneously isomerize into naringenin. This Ipomoea purpurea (Common morning glory) protein is Chalcone synthase C (CHSC).